We begin with the raw amino-acid sequence, 141 residues long: Large ribosomal subunit protein uL16 (141 aa).

A compositionally biased stretch (basic residues) spans 1-16 (MLMPRKPPKGFRKPHH). Positions 1–27 (MLMPRKPPKGFRKPHHPDRSGASKGGN) are disordered.

Belongs to the universal ribosomal protein uL16 family. As to quaternary structure, part of the 50S ribosomal subunit.

Binds 23S rRNA and is also seen to make contacts with the A and possibly P site tRNAs. In Salinispora arenicola (strain CNS-205), this protein is Large ribosomal subunit protein uL16.